Here is a 315-residue protein sequence, read N- to C-terminus: MADMPPVLRHPEKAHRPDQPQPKKPDWIRVKAPTSQGYKDTRDILRNNRLSTVCEEAGCPNVGECWSQGHATMMIMGEICTRGCSFCNVMTGKPNALDVFEPGRVAHAVQKLGLKHVVITSVDRDDLDDGGAEHFAQTIRAIRHRSPASTIEVLTPDFLKSKPGALEAVVEARPDVFNHNLETVPGLYPTVRPGARYFHSLRLLQQVKELDPGMFTKSGIMVGLGEDRQGILQVMDDMRAADVDFITIGQYLQPTPKHHRVDRFVTPEEFKGYEKAAYGKGFLMVSATPLTRSSYHAGDDFAQLRAARLAKLGRA.

The disordered stretch occupies residues 1–33 (MADMPPVLRHPEKAHRPDQPQPKKPDWIRVKAP). Over residues 9–29 (RHPEKAHRPDQPQPKKPDWIR) the composition is skewed to basic and acidic residues. Positions 54, 59, 65, 80, 84, 87, and 294 each coordinate [4Fe-4S] cluster. One can recognise a Radical SAM core domain in the interval 66 to 283 (WSQGHATMMI…EKAAYGKGFL (218 aa)).

This sequence belongs to the radical SAM superfamily. Lipoyl synthase family. The cofactor is [4Fe-4S] cluster.

It localises to the cytoplasm. It catalyses the reaction [[Fe-S] cluster scaffold protein carrying a second [4Fe-4S](2+) cluster] + N(6)-octanoyl-L-lysyl-[protein] + 2 oxidized [2Fe-2S]-[ferredoxin] + 2 S-adenosyl-L-methionine + 4 H(+) = [[Fe-S] cluster scaffold protein] + N(6)-[(R)-dihydrolipoyl]-L-lysyl-[protein] + 4 Fe(3+) + 2 hydrogen sulfide + 2 5'-deoxyadenosine + 2 L-methionine + 2 reduced [2Fe-2S]-[ferredoxin]. It participates in protein modification; protein lipoylation via endogenous pathway; protein N(6)-(lipoyl)lysine from octanoyl-[acyl-carrier-protein]: step 2/2. Catalyzes the radical-mediated insertion of two sulfur atoms into the C-6 and C-8 positions of the octanoyl moiety bound to the lipoyl domains of lipoate-dependent enzymes, thereby converting the octanoylated domains into lipoylated derivatives. The sequence is that of Lipoyl synthase from Paracoccus denitrificans (strain Pd 1222).